A 288-amino-acid polypeptide reads, in one-letter code: Nucleotide-binding protein Tola_2941 (288 aa).

Residue 8-15 (GRSGSGKT) coordinates ATP. 56–59 (DVRN) is a binding site for GTP.

The protein belongs to the RapZ-like family.

In terms of biological role, displays ATPase and GTPase activities. This chain is Nucleotide-binding protein Tola_2941, found in Tolumonas auensis (strain DSM 9187 / NBRC 110442 / TA 4).